The following is a 1330-amino-acid chain: ABC multidrug transporter mdr4 (1330 aa).

N3 carries an N-linked (GlcNAc...) asparagine glycan. Helical transmembrane passes span 90–110 (VLLI…FPLL), 144–164 (VLYV…HSTC), 218–238 (KVGL…VAFI), 243–263 (IAGM…GGGH), 324–344 (HAAQ…LAFW), and 370–390 (IFVL…IHVF). The region spanning 94 to 392 (IGGLLFAICA…VAPFIHVFAS (299 aa)) is the ABC transmembrane type-1 1 domain. Residues 428–666 (IRFRDVHFKY…GGVYAEMVRL (239 aa)) form the ABC transporter 1 domain. Residue 463–470 (GPSGGGKS) participates in ATP binding. N-linked (GlcNAc...) asparagine glycosylation is present at N707. Residues 717-736 (VADTPSDSRDGSEEEARKKR) form a disordered region. Residues 722–733 (SDSRDGSEEEAR) are compositionally biased toward basic and acidic residues. 6 helical membrane passes run 761–781 (LLGL…AIVF), 806–826 (LLFF…GCAF), 871–893 (ASAL…VNLI), 903–923 (AWKI…SGMM), 989–1009 (AWLA…YWWG), and 1023–1043 (FFIV…MFAL). One can recognise an ABC transmembrane type-1 2 domain in the interval 761–1049 (LLGLAMSVII…MFALAPDISK (289 aa)). Residues 1086–1325 (AQLRDVHFTY…SETYRTSVIH (240 aa)) enclose the ABC transporter 2 domain. ATP is bound at residue 1121-1128 (GPSGSGKS).

It belongs to the ABC transporter superfamily. ABCB family. Multidrug resistance exporter (TC 3.A.1.201) subfamily.

It localises to the cell membrane. It carries out the reaction itraconazole(in) + ATP + H2O = itraconazole(out) + ADP + phosphate + H(+). The catalysed reaction is voriconazole(in) + ATP + H2O = voriconazole(out) + ADP + phosphate + H(+). In terms of biological role, pleiotropic ABC efflux transporter that confers resistance to azoles such as itraconazole and voriconazole. The sequence is that of ABC multidrug transporter mdr4 from Aspergillus fumigatus (strain ATCC MYA-4609 / CBS 101355 / FGSC A1100 / Af293) (Neosartorya fumigata).